We begin with the raw amino-acid sequence, 69 residues long: Sec-independent protein translocase protein TatA (69 aa).

The chain crosses the membrane as a helical span at residues 1-21 (MGSLSIWHWLIVLAIALLLFG). Positions 41–69 (KGMNDDEETPPPAQSTTSRTVEHKADESK) are disordered. Positions 60 to 69 (TVEHKADESK) are enriched in basic and acidic residues.

It belongs to the TatA/E family. In terms of assembly, the Tat system comprises two distinct complexes: a TatABC complex, containing multiple copies of TatA, TatB and TatC subunits, and a separate TatA complex, containing only TatA subunits. Substrates initially bind to the TatABC complex, which probably triggers association of the separate TatA complex to form the active translocon.

The protein resides in the cell inner membrane. Part of the twin-arginine translocation (Tat) system that transports large folded proteins containing a characteristic twin-arginine motif in their signal peptide across membranes. TatA could form the protein-conducting channel of the Tat system. The sequence is that of Sec-independent protein translocase protein TatA from Rhizobium rhizogenes (strain K84 / ATCC BAA-868) (Agrobacterium radiobacter).